The sequence spans 526 residues: Peptide chain release factor 3 (526 aa).

One can recognise a tr-type G domain in the interval 9 to 277; the sequence is NKRRTFAIIS…DFVEYAPGPQ (269 aa). GTP is bound by residues 18–25, 86–90, and 140–143; these read SHPDAGKT, DTPGH, and NKLD.

The protein belongs to the TRAFAC class translation factor GTPase superfamily. Classic translation factor GTPase family. PrfC subfamily.

The protein localises to the cytoplasm. Functionally, increases the formation of ribosomal termination complexes and stimulates activities of RF-1 and RF-2. It binds guanine nucleotides and has strong preference for UGA stop codons. It may interact directly with the ribosome. The stimulation of RF-1 and RF-2 is significantly reduced by GTP and GDP, but not by GMP. This chain is Peptide chain release factor 3, found in Legionella pneumophila (strain Paris).